A 75-amino-acid polypeptide reads, in one-letter code: Antimicrobial peptide ctriporin (75 aa).

The signal sequence occupies residues 1–22 (MDSKYLFVFLIFNVIVIDLCQG). Lysine 41 is subject to Lysine amide. Positions 47–75 (ELGSQYDYLQDFRKRELDLDDLLSKFPDY) are excised as a propeptide.

Belongs to the non-disulfide-bridged peptide (NDBP) superfamily. Short antimicrobial peptide (group 4) family. In terms of tissue distribution, expressed by the venom gland.

The protein localises to the secreted. Its subcellular location is the target cell membrane. Functionally, antimicrobial peptide that acts by breaking the cell wall. Is active against Gram-positive bacteria, fungi and antibiotic-resistant pathogens: S.aureus (MIC=5 ug/ml), M.luteus (MIC=5 ug/ml), B.thuringiensis (MIC=10 ug/ml), B.subtilis (MIC=10 ug/ml), C.albicans (MIC=20 ug/ml), methicillin-resistant S.aureus (MIC=5-10 ug/ml), and penicillin-resistant S.epidermidis (MIC=10 ug/ml). Also shows potent activity against antibiotic-sensitive and -resistant Acinetobacter baumannii (MIC=10-20 uM). Shows cytolytic activity against human erythrocytes. In vivo, is efficient in curing staphylococcal skin infection in mice, when externally applied. The sequence is that of Antimicrobial peptide ctriporin from Chaerilus tricostatus (Scorpion).